A 537-amino-acid polypeptide reads, in one-letter code: CTP synthase (537 aa).

The tract at residues 1–268 is amidoligase domain; it reads MPAKFIFVTG…DSIVVERLKL (268 aa). Ser14 contributes to the CTP binding site. Position 14 (Ser14) interacts with UTP. An ATP-binding site is contributed by 15–20; sequence SLGKGI. Tyr55 contacts L-glutamine. Asp72 contributes to the ATP binding site. Positions 72 and 142 each coordinate Mg(2+). CTP contacts are provided by residues 149 to 151, 189 to 194, and Lys225; these read DIE and KTKPTQ. Residues 189 to 194 and Lys225 each bind UTP; that span reads KTKPTQ. The 242-residue stretch at 293–534 folds into the Glutamine amidotransferase type-1 domain; sequence EIALVGKYVT…IGAACRRAGG (242 aa). Gly354 contacts L-glutamine. Cys381 functions as the Nucleophile; for glutamine hydrolysis in the catalytic mechanism. L-glutamine-binding positions include 382–385, Glu405, and Arg462; that span reads LGMQ. Active-site residues include His507 and Glu509.

The protein belongs to the CTP synthase family. As to quaternary structure, homotetramer.

The catalysed reaction is UTP + L-glutamine + ATP + H2O = CTP + L-glutamate + ADP + phosphate + 2 H(+). It carries out the reaction L-glutamine + H2O = L-glutamate + NH4(+). It catalyses the reaction UTP + NH4(+) + ATP = CTP + ADP + phosphate + 2 H(+). Its pathway is pyrimidine metabolism; CTP biosynthesis via de novo pathway; CTP from UDP: step 2/2. With respect to regulation, allosterically activated by GTP, when glutamine is the substrate; GTP has no effect on the reaction when ammonia is the substrate. The allosteric effector GTP functions by stabilizing the protein conformation that binds the tetrahedral intermediate(s) formed during glutamine hydrolysis. Inhibited by the product CTP, via allosteric rather than competitive inhibition. Catalyzes the ATP-dependent amination of UTP to CTP with either L-glutamine or ammonia as the source of nitrogen. Regulates intracellular CTP levels through interactions with the four ribonucleotide triphosphates. The protein is CTP synthase of Moorella thermoacetica (strain ATCC 39073 / JCM 9320).